Here is a 347-residue protein sequence, read N- to C-terminus: Chlorophyllase type 0 (347 aa).

The N-terminal stretch at 1-19 is a signal peptide; the sequence is MAKLLLLIFGVFIFVNSQA. Positions 20–30 are excised as a propeptide; the sequence is QTFPTILEKHN. Positions 160–164 match the GXSXG motif; that stretch reads GHSRG. Residue S162 is the Nucleophile of the active site. D191 serves as the catalytic Charge relay system. N-linked (GlcNAc...) asparagine glycosylation is found at N215, N229, and N251. H262 (charge relay system) is an active-site residue. N321 carries N-linked (GlcNAc...) asparagine glycosylation.

It belongs to the AB hydrolase superfamily. Lipase family.

It catalyses the reaction a chlorophyll + H2O = a chlorophyllide + phytol + H(+). The catalysed reaction is chlorophyll a + H2O = phytol + chlorophyllide a + H(+). The protein operates within porphyrin-containing compound metabolism; chlorophyll degradation. Its activity is regulated as follows. Inhibited by diisopropyl fluorophosphate (DFP), phenylmethanesulfonyl fluoride (PMSF) or p-chloromercuribenzoic acid (PCMB), but not by N-ethylmaleimide (NEM) or iodoacetamide. In terms of biological role, catalyzes the hydrolysis of ester bond in chlorophyll to yield chlorophyllide and phytol. This chain is Chlorophyllase type 0, found in Chenopodium album (Fat hen).